The following is a 511-amino-acid chain: Maturase K (511 aa).

This sequence belongs to the intron maturase 2 family. MatK subfamily.

The protein localises to the plastid. It is found in the chloroplast. In terms of biological role, usually encoded in the trnK tRNA gene intron. Probably assists in splicing its own and other chloroplast group II introns. In Nandina domestica (Heavenly bamboo), this protein is Maturase K.